Here is a 347-residue protein sequence, read N- to C-terminus: Heat-inducible transcription repressor HrcA (347 aa).

It belongs to the HrcA family.

Its function is as follows. Negative regulator of class I heat shock genes (grpE-dnaK-dnaJ and groELS operons). Prevents heat-shock induction of these operons. The sequence is that of Heat-inducible transcription repressor HrcA from Desulforamulus reducens (strain ATCC BAA-1160 / DSM 100696 / MI-1) (Desulfotomaculum reducens).